The chain runs to 466 residues: Ribulose bisphosphate carboxylase large chain (466 aa).

Lysine 4 carries the post-translational modification N6,N6,N6-trimethyllysine. Positions 113 and 163 each coordinate substrate. The active-site Proton acceptor is lysine 165. Lysine 167 contributes to the substrate binding site. Lysine 191, aspartate 193, and glutamate 194 together coordinate Mg(2+). Lysine 191 carries the post-translational modification N6-carboxylysine. The active-site Proton acceptor is histidine 284. Residues arginine 285, histidine 317, and serine 369 each coordinate substrate.

This sequence belongs to the RuBisCO large chain family. Type I subfamily. In terms of assembly, heterohexadecamer of 8 large chains and 8 small chains; disulfide-linked. The disulfide link is formed within the large subunit homodimers. Mg(2+) is required as a cofactor. In terms of processing, the disulfide bond which can form in the large chain dimeric partners within the hexadecamer appears to be associated with oxidative stress and protein turnover.

It is found in the plastid. The protein localises to the chloroplast. The catalysed reaction is 2 (2R)-3-phosphoglycerate + 2 H(+) = D-ribulose 1,5-bisphosphate + CO2 + H2O. It carries out the reaction D-ribulose 1,5-bisphosphate + O2 = 2-phosphoglycolate + (2R)-3-phosphoglycerate + 2 H(+). Functionally, ruBisCO catalyzes two reactions: the carboxylation of D-ribulose 1,5-bisphosphate, the primary event in carbon dioxide fixation, as well as the oxidative fragmentation of the pentose substrate in the photorespiration process. Both reactions occur simultaneously and in competition at the same active site. This Proboscidea louisianica (Louisiana Devil's-claw) protein is Ribulose bisphosphate carboxylase large chain.